The following is a 158-amino-acid chain: NAD(P)H-quinone oxidoreductase subunit J, chloroplastic (158 aa).

Belongs to the complex I 30 kDa subunit family. NDH is composed of at least 16 different subunits, 5 of which are encoded in the nucleus.

It localises to the plastid. It is found in the chloroplast thylakoid membrane. The catalysed reaction is a plastoquinone + NADH + (n+1) H(+)(in) = a plastoquinol + NAD(+) + n H(+)(out). It catalyses the reaction a plastoquinone + NADPH + (n+1) H(+)(in) = a plastoquinol + NADP(+) + n H(+)(out). Functionally, NDH shuttles electrons from NAD(P)H:plastoquinone, via FMN and iron-sulfur (Fe-S) centers, to quinones in the photosynthetic chain and possibly in a chloroplast respiratory chain. The immediate electron acceptor for the enzyme in this species is believed to be plastoquinone. Couples the redox reaction to proton translocation, and thus conserves the redox energy in a proton gradient. This chain is NAD(P)H-quinone oxidoreductase subunit J, chloroplastic, found in Helianthus annuus (Common sunflower).